The sequence spans 364 residues: NADH-quinone oxidoreductase subunit H (364 aa).

The next 8 helical transmembrane spans lie at 21–41 (AGQILAVMIWILLSLAFLLLA), 88–108 (VFLLAPLISFTLAFAAWAVIP), 120–140 (VGILYLFAISSLGVYGIIMGG), 159–179 (MVSYEVSIGFIIITVILLAGS), 208–228 (LPLLLVMVPMAVIFFISGLAE), 267–287 (IVLICAMTTILFFGGWSAPFP), 301–321 (FYYFMWFFLKVIFFFFLVSMA), and 340–360 (VFLPFSLVCVALIAAWRVFGP).

This sequence belongs to the complex I subunit 1 family. In terms of assembly, NDH-1 is composed of 14 different subunits. Subunits NuoA, H, J, K, L, M, N constitute the membrane sector of the complex.

The protein resides in the cell inner membrane. It catalyses the reaction a quinone + NADH + 5 H(+)(in) = a quinol + NAD(+) + 4 H(+)(out). Its function is as follows. NDH-1 shuttles electrons from NADH, via FMN and iron-sulfur (Fe-S) centers, to quinones in the respiratory chain. The immediate electron acceptor for the enzyme in this species is believed to be ubiquinone. Couples the redox reaction to proton translocation (for every two electrons transferred, four hydrogen ions are translocated across the cytoplasmic membrane), and thus conserves the redox energy in a proton gradient. This subunit may bind ubiquinone. This is NADH-quinone oxidoreductase subunit H from Phenylobacterium zucineum (strain HLK1).